A 30-amino-acid polypeptide reads, in one-letter code: MITDSQIFFALCIALTAAVLAIGLGRQLYV.

The chain crosses the membrane as a helical span at residues 5 to 25 (SQIFFALCIALTAAVLAIGLG).

Belongs to the PsaM family.

The protein localises to the plastid. Its subcellular location is the chloroplast thylakoid membrane. The polypeptide is Photosystem I reaction center subunit XII (Emiliania huxleyi (Coccolithophore)).